The chain runs to 354 residues: Cysteine and histidine-rich domain-containing protein morgana (354 aa).

Cys4, Cys9, Cys23, His26, Cys41, Cys42, Cys58, His63, Cys140, Cys145, Cys159, His162, Cys177, Cys178, Cys194, and His199 together coordinate Zn(2+). CHORD domains lie at 4–63 (CYNR…LAKH) and 140–199 (CKNN…YGEH). Residues 210-301 (VVQCRYDWHQ…LEPGSWSNLN (92 aa)) enclose the CS domain. Ser324 and Ser339 each carry phosphoserine.

As to quaternary structure, interacts with Hsp83.

It localises to the cytoplasm. It is found in the nucleus. The protein localises to the cytoskeleton. Its subcellular location is the spindle. In terms of biological role, regulates centrosome duplication and mitotic spindle dynamics. Also involved in controlling the size of dendritic arbors. May act as co-chaperone for Hsp83. During mitotic spindle assembly, regulates microtubule (MT) dynamics by binding to MTs and promoting MT polymerisation. Promotes the elongation and retraction of terminal branches in response to changes in body size, possibly acting downstream of the TORC2 pathway to enable proportional scaling of dendritic arbors. This Drosophila melanogaster (Fruit fly) protein is Cysteine and histidine-rich domain-containing protein morgana.